The chain runs to 387 residues: Phosphoglycerate kinase (387 aa).

Substrate is bound by residues 21–23 (DLN), Arg-36, 59–62 (HLGR), Arg-113, and Arg-146. ATP is bound by residues Lys-197, Glu-314, and 340–343 (GGDT).

Belongs to the phosphoglycerate kinase family. Monomer.

The protein resides in the cytoplasm. It catalyses the reaction (2R)-3-phosphoglycerate + ATP = (2R)-3-phospho-glyceroyl phosphate + ADP. The protein operates within carbohydrate degradation; glycolysis; pyruvate from D-glyceraldehyde 3-phosphate: step 2/5. In Photorhabdus laumondii subsp. laumondii (strain DSM 15139 / CIP 105565 / TT01) (Photorhabdus luminescens subsp. laumondii), this protein is Phosphoglycerate kinase.